A 320-amino-acid chain; its full sequence is 1-aminocyclopropane-1-carboxylate oxidase 2 (320 aa).

Residues 111 to 143 adopt a coiled-coil conformation; sequence DEYRTAMKDFGKRLENLAEDLLDLLCENLGLEK. A Fe2OG dioxygenase domain is found at 156–256; sequence PTFGTKVSNY…RMSVASFYNP (101 aa). Histidine 180, aspartate 182, and histidine 237 together coordinate Fe cation. Arginine 247 contacts 2-oxoglutarate.

This sequence belongs to the iron/ascorbate-dependent oxidoreductase family. The cofactor is Fe(2+). Requires Cu(2+) as cofactor. In terms of tissue distribution, expressed in vegetative tissues. Constitutively expressed in leaves and blades. In ethylene exposed etiolated seedlings, localized in cells at the outer side of the exaggerated hook in an ethylene-dependent manner and following an ethylene sensitive pattern. Also detected in the root tip when treated by ethylene.

The catalysed reaction is 1-aminocyclopropane-1-carboxylate + L-ascorbate + O2 = ethene + L-dehydroascorbate + hydrogen cyanide + CO2 + 2 H2O. It participates in alkene biosynthesis; ethylene biosynthesis via S-adenosyl-L-methionine; ethylene from S-adenosyl-L-methionine: step 2/2. Its function is as follows. Enzyme involved in the ethylene biosynthesis. Required to mediate the 1-aminocyclopropane-1-carboxylic acid (ACC)-mediated reversion of the ABA-induced inhibition of seed germination via endosperm rupture. May promote stem elongation by maximizing the extensibility cells, possibly by activating ethylene biosynthesis, in response to very-long-chain fatty acids (VLCFAs C20:0 to C30:0). This Arabidopsis thaliana (Mouse-ear cress) protein is 1-aminocyclopropane-1-carboxylate oxidase 2 (ACO2).